A 371-amino-acid chain; its full sequence is Probable diguanylate cyclase DgcC (371 aa).

The next 5 membrane-spanning stretches (helical) occupy residues 46–66 (AVGLAGMFLPIASTLVSHPPP), 68–88 (WWWLVLVGWAFVWPHLAWQIA), 112–132 (WVGVMGVNVLPSTAMLMIMCL), 143–163 (FVAGLVLMVVSCLVTLELTGI), and 171–191 (PLEWWLSLPIIVIYPLLFGWV). Positions 240 to 371 (RDATLLIIDI…AGRNRTEVAA (132 aa)) constitute a GGDEF domain. D248 and I249 together coordinate Mg(2+). The substrate site is built by N256 and D265. D291 contributes to the Mg(2+) binding site.

The cofactor is Mg(2+).

The protein localises to the cell inner membrane. The catalysed reaction is 2 GTP = 3',3'-c-di-GMP + 2 diphosphate. Its pathway is purine metabolism; 3',5'-cyclic di-GMP biosynthesis. Functionally, a probable diguanylate cyclase. The last member of a cascade of expressed proteins, its expression requires DgcM. DgcC production induces biosynthesis of cellulose in some E.coli isolates, but not in K12 strains. Cyclic-di-GMP is a second messenger which controls cell surface-associated traits in bacteria. This Escherichia coli (strain K12) protein is Probable diguanylate cyclase DgcC.